Reading from the N-terminus, the 304-residue chain is tRNA pseudouridine synthase B (304 aa).

Catalysis depends on Asp-38, which acts as the Nucleophile.

Belongs to the pseudouridine synthase TruB family. Type 1 subfamily.

The catalysed reaction is uridine(55) in tRNA = pseudouridine(55) in tRNA. Its function is as follows. Responsible for synthesis of pseudouridine from uracil-55 in the psi GC loop of transfer RNAs. The protein is tRNA pseudouridine synthase B of Geobacter sulfurreducens (strain ATCC 51573 / DSM 12127 / PCA).